The chain runs to 169 residues: Der GTPase-activating protein YihI (169 aa).

Disordered stretches follow at residues Met-1–Met-92 and Ser-146–Asn-169. A compositionally biased stretch (basic residues) spans Ser-10 to Lys-19. Over residues Thr-20–Asp-30 the composition is skewed to basic and acidic residues. Residues Arg-31–His-40 are compositionally biased toward basic residues. The span at Gly-49–Gln-58 shows a compositional bias: polar residues. Over residues Tyr-147–Gln-159 the composition is skewed to acidic residues. A compositionally biased stretch (basic and acidic residues) spans Glu-160–Asn-169.

This sequence belongs to the YihI family. As to quaternary structure, interacts with Der.

Its function is as follows. A GTPase-activating protein (GAP) that modifies Der/EngA GTPase function. May play a role in ribosome biogenesis. The chain is Der GTPase-activating protein YihI from Escherichia coli O1:K1 / APEC.